The following is a 534-amino-acid chain: Peptide chain release factor 3 (534 aa).

The 270-residue stretch at 9 to 278 folds into the tr-type G domain; it reads ARRRTFAIIS…FFVEHAPPPQ (270 aa). GTP is bound by residues 18-25, 86-90, and 140-143; these read SHPDAGKT, DTPGH, and NKLD.

Belongs to the TRAFAC class translation factor GTPase superfamily. Classic translation factor GTPase family. PrfC subfamily.

The protein resides in the cytoplasm. In terms of biological role, increases the formation of ribosomal termination complexes and stimulates activities of RF-1 and RF-2. It binds guanine nucleotides and has strong preference for UGA stop codons. It may interact directly with the ribosome. The stimulation of RF-1 and RF-2 is significantly reduced by GTP and GDP, but not by GMP. The chain is Peptide chain release factor 3 from Xanthomonas euvesicatoria pv. vesicatoria (strain 85-10) (Xanthomonas campestris pv. vesicatoria).